Here is a 150-residue protein sequence, read N- to C-terminus: UPF0178 protein BamMC406_1579 (150 aa).

The protein belongs to the UPF0178 family.

In Burkholderia ambifaria (strain MC40-6), this protein is UPF0178 protein BamMC406_1579.